We begin with the raw amino-acid sequence, 539 residues long: uncharacterized protein (539 aa).

Residue Ser216 is the Acyl-ester intermediate of the active site.

This sequence belongs to the type-B carboxylesterase/lipase family.

It localises to the cytoplasm. Its subcellular location is the nucleus. This is an uncharacterized protein from Schizosaccharomyces pombe (strain 972 / ATCC 24843) (Fission yeast).